Here is a 2729-residue protein sequence, read N- to C-terminus: 3-methylorcinaldehyde synthase (2729 aa).

The tract at residues 99 to 238 (LPAALLIPLA…GTISNLTRQL (140 aa)) is N-terminal acylcarrier protein transacylase domain (SAT). Residues 361 to 373 (SLASTVDINSGNG) are compositionally biased toward polar residues. Positions 361–391 (SLASTVDINSGNGKTRRVKPADAQSSANSTH) are disordered. The 432-residue stretch at 397-828 (DTDIAIVGMS…GSNASAVLVQ (432 aa)) folds into the Ketosynthase family 3 (KS3) domain. Catalysis depends on for beta-ketoacyl synthase activity residues cysteine 571, histidine 706, and histidine 748. The malonyl-CoA:ACP transacylase (MAT) domain stretch occupies residues 942-1230 (FGGQVSCFVG…FLEAGTNSSV (289 aa)). The active-site For acyl/malonyl transferase activity is serine 1029. The interval 1345 to 1479 (ETILTFHSSD…GTVAFKNPGD (135 aa)) is N-terminal hotdog fold. The region spanning 1345–1669 (ETILTFHSSD…YVKIARPSME (325 aa)) is the PKS/mFAS DH domain. The product template (PT) domain stretch occupies residues 1374–1665 (KQLLRGHMTL…LGIAYVKIAR (292 aa)). Histidine 1380 functions as the Proton acceptor; for dehydratase activity in the catalytic mechanism. The segment at 1513–1669 (DEMLGNQSIY…YVKIARPSME (157 aa)) is C-terminal hotdog fold. Aspartate 1575 (proton donor; for dehydratase activity) is an active-site residue. The segment covering 1682 to 1701 (AGGKTTPQTATKPAAAPVVA) has biased composition (low complexity). The interval 1682–1726 (AGGKTTPQTATKPAAAPVVADHTPRTTESASTVNGVNLDDRKPEG) is disordered. A compositionally biased stretch (polar residues) spans 1707–1716 (TTESASTVNG). Positions 1750 to 1824 (QDMIARVKAV…GLLQCVAGAL (75 aa)) constitute a Carrier domain. The residue at position 1784 (serine 1784) is an O-(pantetheine 4'-phosphoryl)serine. Over residues 1835–1868 (TLTASSDSGINSAKSSILSGTSTSTSTGTTDTGS) the composition is skewed to low complexity. The segment at 1835–1874 (TLTASSDSGINSAKSSILSGTSTSTSTGTTDTGSDVGQSM) is disordered. Positions 2086–2254 (EINPLRIMET…GYVDWTEGMT (169 aa)) are methyltransferase (C-MeT) domain. Positions 2344–2599 (ITGGTGGLGA…GWTPADYVAR (256 aa)) are reductase (R) domain.

Its pathway is secondary metabolite biosynthesis; terpenoid biosynthesis. Non-reducing polyketide synthase; part of the gene cluster that mediates the biosynthesis of xenovulene A, an unusual meroterpenoid that has potent inhibitory effects on the human gamma-aminobutyrate A (GABAA) benzodiazepine receptor. The first step of xenovulene A biosynthesis is the biosynthesis of 3-methylorcinaldehyde performed by the non-reducing polyketide synthase aspks1. The salicylate hydroxylase asL1 then catalyzes the oxidative dearomatization of 3-methylorcinaldehyde to yield a dearomatized hydroxycyclohexadione. The 2-oxoglutarate-dependent dioxygenase asL3 further catalyzes the oxidative ring expansion to provide the first tropolone metabolite. The cytochrome P450 monooxygenase asR2 allows the synthesis of tropolone hemiacetal. In parallel, a previously unrecognised class of terpene cyclase, asR6, produces alpha-humulene from farnesylpyrophosphate (FPP). The putative Diels-Alderase asR5 probably catalyzes the formation of the tropolone-humulene skeleton by linking humulene and the polyketide moiety. Oxidative-ring contractions catalyzed by asL4 and asL6 then processively remove carbon atoms from the polyketide to yield xenovulene A. The sequence is that of 3-methylorcinaldehyde synthase from Sarocladium schorii (Acremonium strictum (strain IMI 501407)).